The sequence spans 241 residues: MAQHGAMGAFRALCGLALLCALSLGQRPTGGPGCGPGRLLLGTGTDARCCRVHTTRCCRDYPGEECCSEWDCMCVQPEFHCGDPCCTTCRHHPCPPGQGVQSQGKFSFGFQCIDCASGTFSGGHEGHCKPWTDCTQFGFLTVFPGNKTHNAVCVPGSPPAEPLGWLTVVLLAVAACVLLLTSAQLGLHIWQLRSQCMWPRETQLLLEVPPSTEDARSCQFPEEERGERSAEEKGRLGDLWV.

A signal peptide spans 1-25; that stretch reads MAQHGAMGAFRALCGLALLCALSLG. The Extracellular segment spans residues 26-162; it reads QRPTGGPGCG…CVPGSPPAEP (137 aa). 5 disulfides stabilise this stretch: cysteine 34–cysteine 49, cysteine 74–cysteine 86, cysteine 81–cysteine 94, cysteine 115–cysteine 134, and cysteine 128–cysteine 153. TNFR-Cys repeat units follow at residues 34–72, 74–112, and 115–153; these read CGPG…EWDC, CVQP…GFQC, and CASG…NAVC. An N-linked (GlcNAc...) asparagine glycan is attached at asparagine 146. Residues 163–183 traverse the membrane as a helical segment; sequence LGWLTVVLLAVAACVLLLTSA. Residues 184–241 lie on the Cytoplasmic side of the membrane; sequence QLGLHIWQLRSQCMWPRETQLLLEVPPSTEDARSCQFPEEERGERSAEEKGRLGDLWV. The segment at 214–241 is disordered; that stretch reads DARSCQFPEEERGERSAEEKGRLGDLWV. Residues 222 to 241 show a composition bias toward basic and acidic residues; the sequence is EEERGERSAEEKGRLGDLWV.

Binds to TRAF1, TRAF2, and TRAF3, but not TRAF5 and TRAF6. Binds through its C-terminus to SIVA1/SIVA. Expressed in lymph node, peripheral blood leukocytes and weakly in spleen.

The protein resides in the cell membrane. It is found in the secreted. Functionally, receptor for TNFSF18. Seems to be involved in interactions between activated T-lymphocytes and endothelial cells and in the regulation of T-cell receptor-mediated cell death. Mediated NF-kappa-B activation via the TRAF2/NIK pathway. This Homo sapiens (Human) protein is Tumor necrosis factor receptor superfamily member 18 (TNFRSF18).